A 485-amino-acid polypeptide reads, in one-letter code: Glutamyl-tRNA(Gln) amidotransferase subunit A (485 aa).

Residues K79 and S154 each act as charge relay system in the active site. S178 (acyl-ester intermediate) is an active-site residue.

This sequence belongs to the amidase family. GatA subfamily. Heterotrimer of A, B and C subunits.

The enzyme catalyses L-glutamyl-tRNA(Gln) + L-glutamine + ATP + H2O = L-glutaminyl-tRNA(Gln) + L-glutamate + ADP + phosphate + H(+). Allows the formation of correctly charged Gln-tRNA(Gln) through the transamidation of misacylated Glu-tRNA(Gln) in organisms which lack glutaminyl-tRNA synthetase. The reaction takes place in the presence of glutamine and ATP through an activated gamma-phospho-Glu-tRNA(Gln). The chain is Glutamyl-tRNA(Gln) amidotransferase subunit A from Clostridium botulinum (strain Kyoto / Type A2).